Consider the following 307-residue polypeptide: Furaquinocin biosynthesis prenyltransferase (307 aa).

It belongs to the aromatic prenyltransferase family. Monomer.

The catalysed reaction is 2-O,3-dimethylflaviolin + (2E)-geranyl diphosphate = 6-linalyl-2-O,3-dimethylflaviolin + diphosphate. It catalyses the reaction 2-O,3-dimethylflaviolin + (2E)-geranyl diphosphate + H(+) = 7-O-geranyl-2-O,3-dimethylflaviolin + diphosphate. Its activity is regulated as follows. Does not require any metal cations for activity. Functionally, involved in the biosynthesis of furaquinocin. Catalyzes the transfer of a geranyl group to 2-methoxy-3-methyl-flaviolin to yield 6-prenyl-2-methoxy-3-methyl-flaviolin and 7-O-geranyl-2-methoxy-3-methyl-flaviolin in a 10:1 ratio. Can also use other substrates such as flaviolin or 1,3-dihydroxy naphthalene, and can also use DMAPP as prenyl donor. The sequence is that of Furaquinocin biosynthesis prenyltransferase from Streptomyces sp. (strain KO-3988).